We begin with the raw amino-acid sequence, 505 residues long: T-cell activation inhibitor, mitochondrial (505 aa).

Residues leucine 216–arginine 243 are a coiled coil.

In terms of tissue distribution, expressed in peripheral blood leukocytes, mainly in T-lymphocytes.

The protein resides in the mitochondrion. In terms of biological role, may regulate T-cell apoptosis. The protein is T-cell activation inhibitor, mitochondrial (Tcaim) of Rattus norvegicus (Rat).